A 199-amino-acid polypeptide reads, in one-letter code: Secreted chorismate mutase (199 aa).

Residues 1-33 (MLTRPREIYLATAVSIGILLSLIAPLGPPLARA) form the signal peptide. The Chorismate mutase domain maps to 34–113 (DGTSQLAELV…ATEAIEYSRF (80 aa)). Residues Arg49, Lys60, Asp69, 72–76 (RVEQQ), 105–109 (TEAIE), and Arg134 contribute to the substrate site. Cys160 and Cys193 are oxidised to a cystine.

As to quaternary structure, homodimer.

Its subcellular location is the secreted. The catalysed reaction is chorismate = prephenate. Its pathway is metabolic intermediate biosynthesis; prephenate biosynthesis; prephenate from chorismate: step 1/1. With respect to regulation, tyrosine, phenylalanine, and tryptophan moderately enhance chorismate mutase activity at low concentrations, but allosterically inhibit the enzyme at higher concentrations. Its function is as follows. Catalyzes the Claisen rearrangement of chorismate to prephenate. May play some role in the pathogenicity. This Mycobacterium tuberculosis (strain ATCC 25618 / H37Rv) protein is Secreted chorismate mutase.